The following is a 4691-amino-acid chain: MVAGMLMPLDRLRAIYEVLFREGVMVAKKDRRPRSLHPHVPGVTNLQVMRAMASLKARGLVRETFAWCHFYWYLTNEGIDHLRQYLHLPPEIVPASLQRVRRPVAMVIPARRRSPHVQTMQGPLGCPPKRGPLPAEDPAREERQVYRRKEREEGAPETPVVSATTVGTLARPGPEPAPATDERDRVQKKTFTKWVNKHLIKHWRAEAQRHISDLYEDLRDGHNLISLLEVLSGDSLPREKGRMRFHKLQNVQIALDYLRHRQVKLVNIRNDDIADGNPKLTLGLIWTIILHFQISDIQVSGQSEDMTAKEKLLLWSQRMVEGYQGLRCDNFTTSWRDGRLFNAIIHRHKPMLIDMNKVYRQTNLENLDQAFSVAERDLGVTRLLDPEDVDVPQPDEKSIITYVSSLYDAMPRVPGAQDGVRANELQLRWQEYRELVLLLLQWIRHHTAAFEERKFPSSFEEIEILWCQFLKFKETELPAKEADKNRSKVIYQSLEGAVQAGQLKIPPGYHPLDVEKEWGKLHVAILEREKQLRSEFERLECLQRIVSKLQMEAGLCEEQLNQADALLQSDIRLLASGKVAQRAGEVERDLDKADGMIRLLFNDVQTLKDGRHPQGEQMYRRVYRLHERLVAIRTEYNLRLKAGVGAPVTQVTLQSTQRRPELEDSTLRYLQDLLAWVEENQRRIDSAEWGVDLPSVEAQLGSHRGMHQSIEEFRAKIERARNDESQLSPATRGAYRDCLGRLDLQYAKLLNSSKARLRSLESLHGFVAAATKELMWLNEKEEEEVGFDWSDRNTNMAAKKESYSALMRELEMKEKKIKEIQNTGDRLLREDHPARPTVESFQAALQTQWSWMLQLCCCIEAHLKENTAYFQFFSDVREAEEQLQKLQETLRRKYSCDRTITVTRLEDLLQDAQDEKEQLNEYKGHLSGLAKRAKAIVQLKPRNPAHPVRGHVPLIAVCDYKQVEVTVHKGDQCQLVGPAQPSHWKVLSGSSSEAAVPSVCFLVPPPNQEAQEAVARLEAQHQALVTLWHQLHVDMKSLLAWQSLSRDIQLIRSWSLVTFRTLKPEEQRQALRNLELHYQAFLRDSQDAGGFGPEDRLVAEREYGSCSRHYQQLLQSLEQGEQEESRCQRCISELKDIRLQLEACETRTVHRLRLPLDKDPARECAQRIAEQQKAQAEVEGLGKGVARLSAEAEKVLALPEPSPAAPTLRSELELTLGKLEQVRSLSAIYLEKLKTISLVIRSTQGAEEVLKTHEEQLKEAQAVPATLQELEATKASLKKLRAQAEAQQPVFNTLRDELRGAQEVGERLQQRHGERDVEVERWRERVTQLLERWQAVLAQTDVRQRELEQLGRQLRYYRESADPLSAWLQDAKRRQEQIQAVPIANCQAAREQLRQEKALLEEIERHGEKVEECQKFAKQYINAIKDYELQLITYKAQLEPVASPAKKPKVQSGSESVIQEYVDLRTRYSELTTLTSQYIKFISETLRRMEEEERLAEQQRAEERERLAEVEAALEKQRQLAEAHAQAKAQAELEAQELQRRMQEEVARREEAAVDAQQQKRSIQEELQHLRQSSEAEIQAKAQQVEAAERSRMRIEEEIRVVRLQLETTERQRGGAEGELQALRARAEEAEAQKRQAQEEAERLRRQVQDESQRKRQAEAELALRVKAEAEAAREKQRALQALDELRLQAEEAERRLRQAEAERARQVQVALETAQRSAEVELQSKRASFAEKTAQLERTLQEEHVTVAQLREEAERRAQQQAEAERAREEAERELERWQLKANEALRLRLQAEEVAQQKSLAQADAEKQKEEAEREARRRGKAEEQAVRQRELAEQELEKQRQLAEGTAQQRLAAEQELIRLRAETEQGEQQRQLLEEELARLQHEATAATQKRQELEAELAKVRAEMEVLLASKARAEEESRSTSEKSKQRLEAEAGRFRELAEEAARLRALAEEAKRQRQLAEEDAARQRAEAERVLTEKLAAISEATRLKTEAEIALKEKEAENERLRRLAEDEAFQRRRLEEQAALHKADIEERLAQLRKASESELERQKGLVEDTLRQRRQVEEEIMALKVSFEKAAAGKAELELELGRIRSNAEDTMRSKEQAELEAARQRQLAAEEEQRRREAEERVQRSLAAEEEAARQRKVALEEVERLKAKVEEARRLRERAEQESARQLQLAQEAAQKRLQAEEKAHAFVVQQREEELQQTLQQEQNMLDRLRSEAEAARRAAEEAEEAREQAEREAAQSRKQVEEAERLKQSAEEQAQAQAQAQAAAEKLRKEAEQEAARRAQAEQAALKQKQAADAEMEKHKKFAEQTLRQKAQVEQELTTLRLQLEETDHQKSILDEELQRLKAEVTEAARQRSQVEEELFSVRVQMEELGKLKARIEAENRALILRDKDNTQRFLEEEAEKMKQVAEEAARLSVAAQEAARLRQLAEEDLAQQRALAEKMLKEKMQAVQEATRLKAEAELLQQQKELAQEQARRLQEDKEQMAQQLVEETQGFQRTLEAERQRQLEMSAEAERLKLRMAEMSRAQARAEEDAQRFRKQAEEIGEKLHRTELATQEKVTLVQTLEIQRQQSDHDAERLREAIAELEREKEKLKQEAKLLQLKSEEMQTVQQEQILQETQALQKSFLSEKDSLLQRERFIEQEKAKLEQLFQDEVAKAKQLREEQQRQQQQMEQEKQELMASMEEARRRQREAEEGVRRKQEELQHLEQQRQQQEKLLAEENQRLRERLQRLEEEHRAALAHSEIATTQAASTKALPNGRDAPDGPSVEAEPEYTFEGLRQKVPAQQLQEAGILSQEELQRLAQGHTTVAELTQREDVYRYLKGRSSIAGLLLKPTNEKLSVYTALQRQLLSPGTALILLEAQAASGFLLDPVRNRRLTVNEAVKEGVVGPELHHKLLSAERAVTGYKDPYTGEQISLFQAMKKDLIVRDHGVRLLEAQIATGGIIDPVHSHRVPVDVAYKRGYFDEEMNRILSDPSDDTKGFFDPNTHENLTYLQLLERCVEDPETGLRLLPLTDKAAKGGELVYTDTEARDVFEKATVSAPFGKFQGRTVTIWEIINSEYFTAEQRRDLLQQFRTGHITVEKIIKIVITVVEEHERKGQLCFEGLRALVPAAELLDSGVISHELYQQLQRGERSVREVAEADSVRQALRGTNVIAGVWLEEAGQKLSIYEALKKDLLQPEVAVALLEAQAGTGHIIDPATSARLTVDEAVRAGLVGPELHEKLLSAEKAVTGYRDPYSGQSVSLFQALKKGLIPREQGLRLLDAQLSTGGIVDPSKSHRVPLDVAYARGYLDKETNRALTSPRDDARVYHDPSTQEPVTYSQLQQRCRSDQLTGLSLLPLSEKAVRARQEEVYSELQARETLEQAKVEVPVGSFKGRAMTVWELISSEYFTEEQRQELLRQFRTGKVTVEKVIKIVITIVEEVETRRQERLSFSGLRAPVPASELLDAKILSRAQFDQLKDGKTSVKELSEVGSVRTLLQGSGCLAGIYLEDSKEKVTIYEAMRRGLLRPSTATLLLEAQAATGFLVDPVRNQRLYVHEAVKAGVVGPELHEKLLSAEKAVTGYKDPYSGNTISLFQAMKKGLVLRDHAIRLLEAQVATGGIIDPVHSHRLPVDVAYQRGYFDEEMNRVLADPSDDTKGFFDPNTHENLTYLQLLERCVEDPETGLRLLPLKGAEKTEVVETTQVYTEEETRRAFEETQIDIPGGGSHGGSSMSLWEVMQSNMIPEDQRARLMADFQAGRVTKERMIIIIIEIIEKTEIIRQQNLASYDYVRRRLTAEDLYEARIISLETYNLFREGTKNLREVLEMESAWRYLYGTGAVAGVYLPGSRQTLTIYQALKKGLLSAEVARLLLEAQAATGFLLDPVKGERLTVDEAVRKGLVGPELHDRLLSAERAVTGYRDPYTEQTISLFQAMKKELIPAEEALRLLDAQLATGGIVDPRLGFHLPLEVAYQRGYLNKDTHDQLSEPSEVRSYVDPSTDERLSYTQLLKRCRRDDPSGQMLLLLSDARKLTFRGLRKQITVEELVRSQVMDEATALQLQEGLTSIEEVTKNLQKFLEGTSCIAGVFVDATKERLSVYQAMKKGIIRPGTAFELLEAQAATGYVIDPIKGLKLTVEEAVRMGIVGPEFKDKLLSAERAVTGYKDPYSGKLISLFQAMKKGLILKDHGIRLLEAQIATGGIIDPEESHRLPVEVAYKRGLFDEEMNEILTDPSDDTKGFFDPNTEENLTYLQLMERCITDPQTGLCLLPLKEKKRERKTSSKSSVRKRRVVIVDPETGKEMSVYEAYRKGLIDHQTYLELSEQECEWEEITISSSDGVVKSMIIDRRSGRQYDIDDAITKNLIDRSALDQYRAGTLSITEFADMLSGNAGGFRSRSSSVGSSSSYPISSAGPRTQLASWSDPTEETGPVAGILDTETLEKVSITEAMHRNLVDNITGQRLLEAQACTGGIIDPSTGERFPVTEAVNKGLVDKIMVDRINLAQKAFCGFEDPRTKTKMSAAQALKKGWLYYEAGQRFLEVQYLTGGLIEPDTPGRVSLDEALQRGTVDARTAQKLRDVSAYSKYLTCPKTKLKISYKDALDRSMVEEGTGLRLLEAAAQSSKGYYSPYSVSGSGSTAGSRTGSRTGSRAGSRRGSFDATGSGFSMTFSSSSYSSSGYGRRYASGPSASLGGPESAVA.

Positions 1–1478 are globular 1; it reads MVAGMLMPLD…SELTTLTSQY (1478 aa). Residue R21 is modified to Phosphoserine. The residue at position 26 (V26) is a Phosphotyrosine. Disordered regions lie at residues 113–161 and 167–186; these read RSPH…TPVV and GTLA…RDRV. Residues 137–154 are compositionally biased toward basic and acidic residues; the sequence is DPAREERQVYRRKEREEG. Residues 181–411 form an actin-binding region; the sequence is DERDRVQKKT…YVSSLYDAMP (231 aa). Calponin-homology (CH) domains follow at residues 185–293 and 306–411; these read RVQK…LHFQ and MTAK…DAMP. Residues 653-727 form a Spectrin 1 repeat; the sequence is LQSTQRRPEL…ERARNDESQL (75 aa). S728 carries the phosphoserine modification. Spectrin repeat units lie at residues 748–832 and 845–938; these read KLLN…REDH and LQTQ…AIVQ. T823 carries the post-translational modification Phosphothreonine. The 58-residue stretch at 949–1006 folds into the SH3 domain; that stretch reads RGHVPLIAVCDYKQVEVTVHKGDQCQLVGPAQPSHWKVLSGSSSEAAVPSVCFLVPPP. The required for interaction with intermediate filament proteins stretch occupies residues 963 to 4572; sequence VEVTVHKGDQ…ARTAQKLRDV (3610 aa). S1055 is modified (phosphoserine). Residues 1323–1423 form a Spectrin 4 repeat; it reads RERVTQLLER…QKFAKQYINA (101 aa). A Phosphoserine modification is found at S1443. 2 coiled-coil regions span residues 1477-1697 and 1729-2764; these read QYIK…ERRL and SFAE…TTQA. The segment at 1479–2762 is central fibrous rod domain; sequence IKFISETLRR…ALAHSEIATT (1284 aa). Residues 1626 to 1653 are disordered; that stretch reads RAEEAEAQKRQAQEEAERLRRQVQDESQ. Phosphoserine is present on S1729. K1733 is modified (N6-acetyllysine). Disordered regions lie at residues 1801-1835, 2100-2141, and 2223-2317; these read SLAQ…RELA, AEDT…SLAA, and RLRS…KHKK. Composition is skewed to basic and acidic residues over residues 1806-1835, 2100-2116, 2124-2136, and 2223-2266; these read DAEK…RELA, AEDT…EAAR, EEQR…ERVQ, and RLRS…KQSA. The segment covering 2267–2280 has biased composition (low complexity); sequence EEQAQAQAQAQAAA. The span at 2281–2296 shows a compositional bias: basic and acidic residues; that stretch reads EKLRKEAEQEAARRAQ. Phosphoserine is present on S2639. Residue K2644 is modified to N6-acetyllysine. The segment at 2675–2728 is disordered; sequence LREEQQRQQQQMEQEKQELMASMEEARRRQREAEEGVRRKQEELQHLEQQRQQQ. Residues 2687 to 2728 are compositionally biased toward basic and acidic residues; sequence EQEKQELMASMEEARRRQREAEEGVRRKQEELQHLEQQRQQQ. The globular 2 stretch occupies residues 2763-4691; that stretch reads QAASTKALPN…SLGGPESAVA (1929 aa). Position 2781 is a phosphoserine (S2781). Y2788 is subject to Phosphotyrosine. Plectin repeat units follow at residues 2795–2832, 2833–2870, 2871–2908, 2909–2946, 2947–2984, and 2988–3022; these read QKVP…REDV, YRYL…PGTA, LILL…PELH, HKLL…RDHG, VRLL…EEMN, and SDPS…PETG. S2809 is subject to Phosphoserine. T2893 is modified (phosphothreonine). Phosphotyrosine is present on Y3040. Residues K3060 and K3098 each carry the N6-acetyllysine modification. Plectin repeat units lie at residues 3123–3160, 3161–3198, 3199–3236, 3237–3274, 3275–3312, and 3315–3350; these read ALVP…ADSV, RQAL…PEVA, VALL…PELH, EKLL…REQG, LRLL…KETN, and LTSP…QLTG. A compositionally biased stretch (basic and acidic residues) spans 3312-3326; it reads NRALTSPRDDARVYH. The disordered stretch occupies residues 3312-3338; sequence NRALTSPRDDARVYHDPSTQEPVTYSQ. The span at 3328–3338 shows a compositional bias: polar residues; sequence PSTQEPVTYSQ. Y3369 carries the post-translational modification Phosphotyrosine. K3427 carries the post-translational modification N6-acetyllysine. 5 Plectin repeats span residues 3492-3529, 3530-3567, 3568-3605, 3606-3643, and 3647-3681; these read RTLL…PSTA, TLLL…PELH, EKLL…RDHA, IRLL…EEMN, and ADPS…PETG. The residue at position 3792 (T3792) is a Phosphothreonine. Position 3797 is a phosphotyrosine (Y3797). 5 Plectin repeats span residues 3827-3864, 3865-3902, 3903-3940, 3941-3978, and 3982-4015; these read WRYL…AEVA, RLLL…PELH, DRLL…AEEA, LRLL…KDTH, and SEPS…DPSG. Residues 3954-4291 form a required for interaction with type2 keratins, DES and VIM region; it reads VDPRLGFHLP…KRRVVIVDPE (338 aa). T4037 carries the post-translational modification Phosphothreonine. Position 4061 is a phosphoserine (S4061). 6 Plectin repeats span residues 4070 to 4107, 4108 to 4145, 4146 to 4183, 4184 to 4221, 4225 to 4259, and 4272 to 4312; these read QKFL…PGTA, FELL…PEFK, DKLL…KDHG, IRLL…EEMN, TDPS…PQTG, and RKTS…HQTY. The tract at residues 4257 to 4307 is binding to intermediate filaments; the sequence is QTGLCLLPLKEKKRERKTSSKSSVRKRRVVIVDPETGKEMSVYEAYRKGLI. The segment at 4387–4420 is disordered; it reads FRSRSSSVGSSSSYPISSAGPRTQLASWSDPTEE. A phosphoserine mark is found at S4389, S4391, S4392, S4393, S4396, S4397, S4398, and S4399. Low complexity predominate over residues 4389 to 4404; the sequence is SRSSSVGSSSSYPISS. Y4400 is modified (phosphotyrosine). Residues S4403 and S4413 each carry the phosphoserine modification. Residues 4406–4416 are compositionally biased toward polar residues; the sequence is GPRTQLASWSD. 5 Plectin repeats span residues 4415–4452, 4453–4490, 4491–4528, 4529–4566, and 4567–4604; these read SDPT…NITG, QRLL…KIMV, DRIN…YEAG, QRFL…ARTA, and QKLR…EGTG. The residue at position 4418 (T4418) is a Phosphothreonine. The tract at residues 4503–4572 is required for efficient interaction with KRT5 and KRT14 heterodimers; the sequence is FEDPRTKTKM…ARTAQKLRDV (70 aa). Position 4546 is a phosphothreonine; by CDK1 (T4546). Phosphoserine is present on residues S4614 and S4620. Low complexity predominate over residues 4618–4678; it reads YYSPYSVSGS…SGYGRRYASG (61 aa). Residues 4618–4691 form a disordered region; sequence YYSPYSVSGS…SLGGPESAVA (74 aa). Y4622 is subject to Phosphotyrosine. S4623, S4625, and S4629 each carry phosphoserine. The residue at position 4630 (T4630) is a Phosphothreonine. The segment at 4632 to 4647 is 4 X 4 AA tandem repeats of G-S-R-X; it reads GSRTGSRTGSRAGSRR. S4633 carries the phosphoserine modification. Omega-N-methylarginine occurs at positions 4634 and 4647. Phosphoserine is present on residues S4649 and S4682.

It belongs to the plakin or cytolinker family. In terms of assembly, homodimer or homotetramer. Interacts (via actin-binding domain) with SYNE3. Interacts (via calponin-homology (CH) 1 domain) with VIM (via rod region). Interacts (via N-terminus) with DST isoform 2 (via N-terminus). Interacts with FER. Interacts with TOR1A. Interacts with ANK3. Identified in complexes that contain VIM, EZR, AHNAK, BFSP1, BFSP2, ANK2, PLEC, PRX and spectrin. Interacts with KRT14, heterodimers consisting of KRT8 and KRT18, heterodimers consisting of KRT5 and KRT14, heterodimers consisting of KRT14 and KRT15, and heterodimers consisting of KRT1 and KRT10. Interacts with DES and VIM. Post-translationally, phosphorylated by CDK1; regulates dissociation from intermediate filaments during mitosis. Isoform PLEC-1A is phosphorylated on Ser-21. Isoform PLEC-1A is phosphorylated on Tyr-26. Detected in eye lens fiber cells (at protein level). Expressed at high levels in lung, brain, small intestine, muscle, heart and skin with lower levels found in kidney, liver, uterus, spleen and salivary gland.

The protein localises to the cytoplasm. The protein resides in the cytoskeleton. It is found in the cell junction. It localises to the hemidesmosome. Its subcellular location is the cell projection. The protein localises to the podosome. In terms of biological role, interlinks intermediate filaments with microtubules and microfilaments and anchors intermediate filaments to desmosomes or hemidesmosomes. May be involved not only in the cross-linking and stabilization of cytoskeletal intermediate filaments network, but also in the regulation of their dynamics. The protein is Plectin (Plec) of Mus musculus (Mouse).